The following is a 231-amino-acid chain: Demethylmenaquinone methyltransferase (231 aa).

Residues Thr62, Asp80, 102–103 (DA), and Ser119 each bind S-adenosyl-L-methionine.

It belongs to the class I-like SAM-binding methyltransferase superfamily. MenG/UbiE family.

It carries out the reaction a 2-demethylmenaquinol + S-adenosyl-L-methionine = a menaquinol + S-adenosyl-L-homocysteine + H(+). The protein operates within quinol/quinone metabolism; menaquinone biosynthesis; menaquinol from 1,4-dihydroxy-2-naphthoate: step 2/2. Functionally, methyltransferase required for the conversion of demethylmenaquinol (DMKH2) to menaquinol (MKH2). The polypeptide is Demethylmenaquinone methyltransferase (Streptomyces avermitilis (strain ATCC 31267 / DSM 46492 / JCM 5070 / NBRC 14893 / NCIMB 12804 / NRRL 8165 / MA-4680)).